Here is a 562-residue protein sequence, read N- to C-terminus: Undecaprenyl phosphate-alpha-4-amino-4-deoxy-L-arabinose arabinosyl transferase (562 aa).

Helical transmembrane passes span 14-34, 91-111, 120-140, 142-162, 186-206, 215-235, 267-287, 302-322, 324-344, 354-374, 395-415, and 425-445; these read IKFS…PLNY, FSVR…IYLF, ILSL…IIGT, SVLD…FWLA, FITK…IWLF, TIIH…PWIY, PFWY…GFLF, IEFY…ISKG, LPTY…KNIE, LLKI…IFII, LILC…IIFN, and LSII…IIYA.

This sequence belongs to the glycosyltransferase 83 family.

The protein localises to the cell inner membrane. It catalyses the reaction 4-amino-4-deoxy-alpha-L-arabinopyranosyl di-trans,octa-cis-undecaprenyl phosphate + lipid IVA = lipid IIA + di-trans,octa-cis-undecaprenyl phosphate.. Its pathway is lipopolysaccharide metabolism; 4-amino-4-deoxy-beta-L-arabinose-lipid A biosynthesis. In terms of biological role, catalyzes the transfer of the L-Ara4N moiety of the glycolipid undecaprenyl phosphate-alpha-L-Ara4N to lipid A. The modified arabinose is attached to lipid A and is required for resistance to polymyxin and cationic antimicrobial peptides. This chain is Undecaprenyl phosphate-alpha-4-amino-4-deoxy-L-arabinose arabinosyl transferase, found in Wigglesworthia glossinidia brevipalpis.